The primary structure comprises 302 residues: MNPLVINLQKCSIHDGPGIRSTVFFKGCPLECVWCHNPESQTYTKQVLYNEERCSKCEACINICPHKAIYKGETKICLDQDKCEFCETCLDYCVNNAREIVGQEYSVRDLVKEIEKDRIFYEESGGGVTLSGGEVMAQDMDFICGVINMCKSKGIHVAIDTCGYAKSENYERVAKCADLFLYDIKLIDEDKHIKFTGKSNDLILKNVKILSELGANINIRIPLIVGVNVDDENLEVKKMIEFLKPLNIQAVSLLPYHNIGKHKYDKIYKKYEGEELQRPSEEKLEEIKRLFEASNFNTKIGG.

Positions 14–297 (HDGPGIRSTV…KRLFEASNFN (284 aa)) constitute a Radical SAM core domain. C28, C32, C35, C54, C57, C60, and C93 together coordinate [4Fe-4S] cluster. 34–36 (WCH) contacts S-adenosyl-L-methionine. 4Fe-4S ferredoxin-type domains are found at residues 45–74 (KQVL…KGET) and 75–103 (KICL…IVGQ). S-adenosyl-L-methionine-binding positions include G133, 183–185 (DIK), and H257.

The protein belongs to the organic radical-activating enzymes family. The cofactor is [4Fe-4S] cluster.

The enzyme catalyses glycyl-[protein] + reduced [flavodoxin] + S-adenosyl-L-methionine = glycin-2-yl radical-[protein] + semiquinone [flavodoxin] + 5'-deoxyadenosine + L-methionine + H(+). Functionally, catalyzes activation of the trans-4-hydroxy-L-proline dehydratase under anaerobic conditions by generation of an organic free radical on a glycine residue, via a homolytic cleavage of S-adenosyl-L-methionine (SAM). Is involved in the anaerobic degradation of 4-hydroxyproline. This Clostridioides difficile (Peptoclostridium difficile) protein is Trans-4-hydroxy-L-proline dehydratase activating enzyme.